Reading from the N-terminus, the 548-residue chain is Glucose-6-phosphate isomerase (548 aa).

The active-site Proton donor is the Glu-355. Active-site residues include His-386 and Lys-514.

The protein belongs to the GPI family.

The protein localises to the cytoplasm. It carries out the reaction alpha-D-glucose 6-phosphate = beta-D-fructose 6-phosphate. Its pathway is carbohydrate biosynthesis; gluconeogenesis. It participates in carbohydrate degradation; glycolysis; D-glyceraldehyde 3-phosphate and glycerone phosphate from D-glucose: step 2/4. Functionally, catalyzes the reversible isomerization of glucose-6-phosphate to fructose-6-phosphate. The sequence is that of Glucose-6-phosphate isomerase from Hamiltonella defensa subsp. Acyrthosiphon pisum (strain 5AT).